The chain runs to 160 residues: Ribosomal RNA large subunit methyltransferase H (160 aa).

Residues Leu76, Gly108, and 127 to 132 (FGFMTW) each bind S-adenosyl-L-methionine.

Belongs to the RNA methyltransferase RlmH family. In terms of assembly, homodimer.

It localises to the cytoplasm. It catalyses the reaction pseudouridine(1915) in 23S rRNA + S-adenosyl-L-methionine = N(3)-methylpseudouridine(1915) in 23S rRNA + S-adenosyl-L-homocysteine + H(+). Its function is as follows. Specifically methylates the pseudouridine at position 1915 (m3Psi1915) in 23S rRNA. This is Ribosomal RNA large subunit methyltransferase H from Bartonella tribocorum (strain CIP 105476 / IBS 506).